Here is a 93-residue protein sequence, read N- to C-terminus: OMEGA-ectatommitoxin(02)-Rm1c (93 aa).

Residues 1 to 30 form the signal peptide; the sequence is MKDSYISIVIAYLMVTFILVSSMPIEGEKG. Cystine bridges form between C39–C52, C47–C68, and C70–C79. The EGF-like domain maps to 43-80; that stretch reads YENYCFNGKCVHVVAQDEPGKPCYSCICDEFYIGERCG.

It belongs to the EGF domain peptide family. In terms of tissue distribution, expressed by the venom gland.

It localises to the secreted. Its function is as follows. Ant peptide with probable defensive activity which acts as a potent agonist of the mammalian epidermal growth factor receptor (EGFR). Mimics, both structurally and functionally, vertebrate epidermal growth factor (EGF) peptide hormones. In vivo, intraplantar injection in mice causes long-lasting (several days) hypersensitivity of the injected paw to both mechanical and thermal stimuli. Its long-lasting effect is unusual for venom toxins whose effects are usually immediate. One possible explanation is that it would reduce the duration of a nest attack, discourage future attacks, or enhance the actions of subsequent exposure to other pain-inducing venom peptides. The polypeptide is OMEGA-ectatommitoxin(02)-Rm1c (Rhytidoponera metallica (Australian green-headed ant)).